A 281-amino-acid chain; its full sequence is Acetyl-coenzyme A carboxylase carboxyl transferase subunit beta (281 aa).

The 259-residue stretch at 23-281 (IWTKCGSCQA…SLLVKLHYKN (259 aa)) folds into the CoA carboxyltransferase N-terminal domain. Positions 27, 30, 46, and 49 each coordinate Zn(2+). The C4-type zinc finger occupies 27–49 (CGSCQAVLYKSELEKLQEVCPKC).

It belongs to the AccD/PCCB family. As to quaternary structure, acetyl-CoA carboxylase is a heterohexamer composed of biotin carboxyl carrier protein (AccB), biotin carboxylase (AccC) and two subunits each of ACCase subunit alpha (AccA) and ACCase subunit beta (AccD). Requires Zn(2+) as cofactor.

The protein resides in the cytoplasm. It carries out the reaction N(6)-carboxybiotinyl-L-lysyl-[protein] + acetyl-CoA = N(6)-biotinyl-L-lysyl-[protein] + malonyl-CoA. The protein operates within lipid metabolism; malonyl-CoA biosynthesis; malonyl-CoA from acetyl-CoA: step 1/1. In terms of biological role, component of the acetyl coenzyme A carboxylase (ACC) complex. Biotin carboxylase (BC) catalyzes the carboxylation of biotin on its carrier protein (BCCP) and then the CO(2) group is transferred by the transcarboxylase to acetyl-CoA to form malonyl-CoA. This is Acetyl-coenzyme A carboxylase carboxyl transferase subunit beta from Alteromonas mediterranea (strain DSM 17117 / CIP 110805 / LMG 28347 / Deep ecotype).